The following is a 462-amino-acid chain: Myo-inositol transporter 3B (462 aa).

Helical transmembrane passes span 1–21 (MAIL…ASSY), 31–51 (IILG…ITET), 61–81 (IGVN…IGAG), 91–111 (LLFA…HYLP), 194–214 (LCGF…LGLS), 218–238 (LGGL…MSLV), 245–265 (GLML…IIGF), 289–309 (VVIG…SHLV), 324–344 (GSGV…VSYL), and 354–374 (GTYG…VFCF).

This sequence belongs to the major facilitator superfamily. Sugar transporter (TC 2.A.1.1) family.

It localises to the cell membrane. The catalysed reaction is myo-inositol(out) + H(+)(out) = myo-inositol(in) + H(+)(in). Functionally, transporter for myo-inositol. This chain is Myo-inositol transporter 3B, found in Cryptococcus neoformans var. grubii serotype A (strain H99 / ATCC 208821 / CBS 10515 / FGSC 9487) (Filobasidiella neoformans var. grubii).